A 546-amino-acid chain; its full sequence is Chaperonin GroEL (546 aa).

ATP contacts are provided by residues 30–33, lysine 51, 87–91, glycine 415, and aspartate 495; these read TLGP and DGTTT.

Belongs to the chaperonin (HSP60) family. As to quaternary structure, forms a cylinder of 14 subunits composed of two heptameric rings stacked back-to-back. Interacts with the co-chaperonin GroES.

The protein localises to the cytoplasm. The catalysed reaction is ATP + H2O + a folded polypeptide = ADP + phosphate + an unfolded polypeptide.. Together with its co-chaperonin GroES, plays an essential role in assisting protein folding. The GroEL-GroES system forms a nano-cage that allows encapsulation of the non-native substrate proteins and provides a physical environment optimized to promote and accelerate protein folding. The polypeptide is Chaperonin GroEL (Brucella melitensis biotype 1 (strain ATCC 23456 / CCUG 17765 / NCTC 10094 / 16M)).